We begin with the raw amino-acid sequence, 126 residues long: MSDPRYQIDVSVTTRYLAAQSQPEQNRYAFSYTVTIVNNGQLPAKLLSRHWIITDGDGRVQEVRGAGVVGQQPDIAPGASHTYSSGTVMATQVGIMQGSYQMLAEDGKRFDATIAPFRLAVPGALH.

Residues Ser2 to His126 form the ApaG domain.

This chain is Protein ApaG, found in Ectopseudomonas mendocina (strain ymp) (Pseudomonas mendocina).